We begin with the raw amino-acid sequence, 129 residues long: DNA base-flipping protein (129 aa).

It belongs to the MGMT family. ATL subfamily. In terms of assembly, interacts with HelD and UvrA.

Its function is as follows. Involved in DNA damage recognition. Binds DNA containing O(6)-methylguanine and larger O(6)-alkylguanine adducts, and to double-stranded DNA that contains an AP (apurinic/apyrimidinic) site. Binds to the damaged base and flips the base out of the DNA duplex into an extrahelical conformation, which allows processing by repair proteins. Works in partnership with the nucleotide excision repair (NER) pathway to enhance the repair of the O(6)-alkylguanine adducts larger than the methyl adduct. Also prevents methyl-directed mismatch repair (MMR)-mediated attack of the O(6)-alkylguanine:T mispairs for the larger alkyl groups. The protein is DNA base-flipping protein of Escherichia coli (strain K12).